The primary structure comprises 651 residues: DNA mismatch repair protein MutL (651 aa).

This sequence belongs to the DNA mismatch repair MutL/HexB family.

This protein is involved in the repair of mismatches in DNA. It is required for dam-dependent methyl-directed DNA mismatch repair. May act as a 'molecular matchmaker', a protein that promotes the formation of a stable complex between two or more DNA-binding proteins in an ATP-dependent manner without itself being part of a final effector complex. In Streptococcus mutans serotype c (strain ATCC 700610 / UA159), this protein is DNA mismatch repair protein MutL.